We begin with the raw amino-acid sequence, 938 residues long: Isoleucine--tRNA ligase (938 aa).

The short motif at 58–68 is the 'HIGH' region element; it reads PYANGNIHIGH. Residue Glu561 coordinates L-isoleucyl-5'-AMP. A 'KMSKS' region motif is present at residues 602–606; sequence KMSKS. Position 605 (Lys605) interacts with ATP. Zn(2+)-binding residues include Cys901, Cys904, Cys921, and Cys924.

It belongs to the class-I aminoacyl-tRNA synthetase family. IleS type 1 subfamily. Monomer. Zn(2+) is required as a cofactor.

It is found in the cytoplasm. It catalyses the reaction tRNA(Ile) + L-isoleucine + ATP = L-isoleucyl-tRNA(Ile) + AMP + diphosphate. Catalyzes the attachment of isoleucine to tRNA(Ile). As IleRS can inadvertently accommodate and process structurally similar amino acids such as valine, to avoid such errors it has two additional distinct tRNA(Ile)-dependent editing activities. One activity is designated as 'pretransfer' editing and involves the hydrolysis of activated Val-AMP. The other activity is designated 'posttransfer' editing and involves deacylation of mischarged Val-tRNA(Ile). This Yersinia pestis bv. Antiqua (strain Angola) protein is Isoleucine--tRNA ligase.